The following is a 435-amino-acid chain: uncharacterized protein (435 aa).

Positions 261, 294, 318, and 366 each coordinate S-adenosyl-L-methionine. C393 serves as the catalytic Nucleophile.

Belongs to the class I-like SAM-binding methyltransferase superfamily. RNA M5U methyltransferase family.

This is an uncharacterized protein from Bifidobacterium longum (strain NCC 2705).